We begin with the raw amino-acid sequence, 183 residues long: Large ribosomal subunit protein uL6 (183 aa).

Belongs to the universal ribosomal protein uL6 family. Part of the 50S ribosomal subunit.

Functionally, this protein binds to the 23S rRNA, and is important in its secondary structure. It is located near the subunit interface in the base of the L7/L12 stalk, and near the tRNA binding site of the peptidyltransferase center. This is Large ribosomal subunit protein uL6 from Porphyromonas gingivalis (strain ATCC 33277 / DSM 20709 / CIP 103683 / JCM 12257 / NCTC 11834 / 2561).